The sequence spans 471 residues: Cytochrome b-c1 complex subunit 1, mitochondrial (471 aa).

This sequence belongs to the peptidase M16 family.

It localises to the mitochondrion matrix. The protein is Cytochrome b-c1 complex subunit 1, mitochondrial (ucr-1) of Caenorhabditis elegans.